We begin with the raw amino-acid sequence, 201 residues long: Single-stranded DNA-binding protein DdrA (201 aa).

It belongs to the RAD52 family. The truncated form (1-160) of DdrA forms heptameric rings that can assemble into a 3-ring structure.

Its function is as follows. ssDNA-binding protein that contributes to the ionizing radiation resistance of D.deserti. Plays a role in DNA repair and genome reconstitution, in a RecA-independent process, since DdrA is essential for recovery from severe genomic fragmentation as a result of exposure to severe levels of ionizing radiation in an environment lacking nutrients. In vitro, binds to the 3'-ends of single-stranded DNA, and probably protects them from nuclease degradation. Thus, DdrA is part of a DNA end-protection system that helps to preserve genome integrity following irradiation or desiccation. The sequence is that of Single-stranded DNA-binding protein DdrA (ddrA) from Deinococcus deserti (strain DSM 17065 / CIP 109153 / LMG 22923 / VCD115).